The sequence spans 289 residues: ATP synthase subunit a (289 aa).

6 helical membrane passes run 43–63 (AFHL…LLIF), 103–123 (VIAP…AVDL), 160–180 (FCVF…GGFI), 193–213 (IFVQ…TLIA), 232–252 (VFIL…GLGV), and 259–279 (AVFH…LTIV).

It belongs to the ATPase A chain family. F-type ATPases have 2 components, CF(1) - the catalytic core - and CF(0) - the membrane proton channel. CF(1) has five subunits: alpha(3), beta(3), gamma(1), delta(1), epsilon(1). CF(0) has three main subunits: a(1), b(2) and c(9-12). The alpha and beta chains form an alternating ring which encloses part of the gamma chain. CF(1) is attached to CF(0) by a central stalk formed by the gamma and epsilon chains, while a peripheral stalk is formed by the delta and b chains.

It is found in the cell inner membrane. Key component of the proton channel; it plays a direct role in the translocation of protons across the membrane. The sequence is that of ATP synthase subunit a from Pseudomonas putida (strain ATCC 700007 / DSM 6899 / JCM 31910 / BCRC 17059 / LMG 24140 / F1).